The sequence spans 444 residues: Acetyl-CoA--deacetylcephalosporin C acetyltransferase (444 aa).

Residues M1–S71 constitute a propeptide that is removed on maturation. The AB hydrolase-1 domain occupies V112 to V425. Residues S208 and H421 contribute to the active site.

The protein belongs to the AB hydrolase superfamily. MetX family. In terms of assembly, heterodimer of chain I and chain II.

The catalysed reaction is deacetylcephalosporin C + acetyl-CoA = cephalosporin C + CoA. The protein operates within antibiotic biosynthesis; cephalosporin C biosynthesis. Functionally, catalyzes the conversion of deacetylcephalosporin C to cephalosporin C. The polypeptide is Acetyl-CoA--deacetylcephalosporin C acetyltransferase (CEFG) (Hapsidospora chrysogena (Acremonium chrysogenum)).